The sequence spans 447 residues: Adenylosuccinate synthetase (447 aa).

GTP-binding positions include 35–41 and 63–65; these read GDEGKGK and GHT. The active-site Proton acceptor is the Asp36. Residues Asp36 and Gly63 each contribute to the Mg(2+) site. IMP contacts are provided by residues 36–39, 61–64, Thr153, Arg167, Asn245, Thr260, and Arg324; these read DEGK and NAGH. The active-site Proton donor is the His64. Residue 320-326 coordinates substrate; it reads VTTKRKR. Residues Arg326, 352 to 354, and 435 to 437 contribute to the GTP site; these read KLD and GVG.

The protein belongs to the adenylosuccinate synthetase family. As to quaternary structure, homodimer. Requires Mg(2+) as cofactor.

Its subcellular location is the cytoplasm. It catalyses the reaction IMP + L-aspartate + GTP = N(6)-(1,2-dicarboxyethyl)-AMP + GDP + phosphate + 2 H(+). It participates in purine metabolism; AMP biosynthesis via de novo pathway; AMP from IMP: step 1/2. In terms of biological role, plays an important role in the de novo pathway and in the salvage pathway of purine nucleotide biosynthesis. Catalyzes the first committed step in the biosynthesis of AMP from IMP. The polypeptide is Adenylosuccinate synthetase (Drosophila erecta (Fruit fly)).